The sequence spans 1170 residues: Cellulose synthase-like protein D2 (1170 aa).

3 disordered regions span residues 1-48 (MASS…RRTH), 54-73 (SYSR…MSPE), and 269-295 (NEVD…EFTS). Over residues 10–24 (RHSNSSRLSRMSYSG) the composition is skewed to low complexity. Over residues 273 to 288 (NGGGGGGGGGLGGGDG) the composition is skewed to gly residues. Helical transmembrane passes span 311-331 (VLSP…LFLA) and 341-361 (AMWL…SWLL). Asp-441 is an active-site residue. Residues 527 to 551 (HAREEIKAMKRQREAALDDVVEAVK) are a coiled coil. Asp-873 is an active-site residue. The next 6 helical transmembrane spans lie at 955-975 (IFLI…QFIV), 981-1001 (TFLT…VLEI), 1027-1047 (LAAV…SFTL), 1070-1090 (SLMI…AVGF), 1104-1124 (LLGG…FAKG), and 1134-1154 (TIVF…WVAI).

Belongs to the glycosyltransferase 2 family. Plant cellulose synthase-like D subfamily.

Its subcellular location is the golgi apparatus membrane. Functionally, thought to be a Golgi-localized beta-glycan synthase that polymerize the backbones of noncellulosic polysaccharides (hemicelluloses) of plant cell wall. In Oryza sativa subsp. japonica (Rice), this protein is Cellulose synthase-like protein D2 (CSLD2).